Reading from the N-terminus, the 285-residue chain is Phosphate import ATP-binding protein PstB (285 aa).

The ABC transporter domain maps to 39-280; that stretch reads LEVSDLQLWY…PAKKQTEDYI (242 aa). 71–78 serves as a coordination point for ATP; sequence GPSGCGKS.

This sequence belongs to the ABC transporter superfamily. Phosphate importer (TC 3.A.1.7) family. The complex is composed of two ATP-binding proteins (PstB), two transmembrane proteins (PstC and PstA) and a solute-binding protein (PstS).

Its subcellular location is the cell inner membrane. It catalyses the reaction phosphate(out) + ATP + H2O = ADP + 2 phosphate(in) + H(+). Its function is as follows. Part of the ABC transporter complex PstSACB involved in phosphate import. Responsible for energy coupling to the transport system. The sequence is that of Phosphate import ATP-binding protein PstB from Alkalilimnicola ehrlichii (strain ATCC BAA-1101 / DSM 17681 / MLHE-1).